The chain runs to 416 residues: Exodeoxyribonuclease 7 large subunit (416 aa).

The tract at residues 1-21 is disordered; the sequence is MTEPDSKPKKGRAGRKKAEPV.

Belongs to the XseA family. As to quaternary structure, heterooligomer composed of large and small subunits.

Its subcellular location is the cytoplasm. The catalysed reaction is Exonucleolytic cleavage in either 5'- to 3'- or 3'- to 5'-direction to yield nucleoside 5'-phosphates.. Bidirectionally degrades single-stranded DNA into large acid-insoluble oligonucleotides, which are then degraded further into small acid-soluble oligonucleotides. The polypeptide is Exodeoxyribonuclease 7 large subunit (Deinococcus radiodurans (strain ATCC 13939 / DSM 20539 / JCM 16871 / CCUG 27074 / LMG 4051 / NBRC 15346 / NCIMB 9279 / VKM B-1422 / R1)).